The sequence spans 141 residues: MAVEQTFSIIKPDAVKNNHIGAIVARFEKAGLKVIAQRMLQLTPAQAEGFYAEHKGRSFYDELVAFMTSGPVVVQVLYGENAIALNRELMGATDPTKAAPGTIRADFSMSMPANAVHGSDSPISAAREIAYFFPTHEVVVR.

6 residues coordinate ATP: Lys-11, Phe-59, Arg-87, Thr-93, Arg-104, and Asn-114. Residue His-117 is the Pros-phosphohistidine intermediate of the active site.

This sequence belongs to the NDK family. As to quaternary structure, homotetramer. The cofactor is Mg(2+).

It localises to the cytoplasm. The catalysed reaction is a 2'-deoxyribonucleoside 5'-diphosphate + ATP = a 2'-deoxyribonucleoside 5'-triphosphate + ADP. The enzyme catalyses a ribonucleoside 5'-diphosphate + ATP = a ribonucleoside 5'-triphosphate + ADP. Major role in the synthesis of nucleoside triphosphates other than ATP. The ATP gamma phosphate is transferred to the NDP beta phosphate via a ping-pong mechanism, using a phosphorylated active-site intermediate. This chain is Nucleoside diphosphate kinase, found in Cellvibrio japonicus (strain Ueda107) (Pseudomonas fluorescens subsp. cellulosa).